A 282-amino-acid polypeptide reads, in one-letter code: ATP phosphoribosyltransferase (282 aa).

The protein belongs to the ATP phosphoribosyltransferase family. Long subfamily. The cofactor is Mg(2+).

Its subcellular location is the cytoplasm. The catalysed reaction is 1-(5-phospho-beta-D-ribosyl)-ATP + diphosphate = 5-phospho-alpha-D-ribose 1-diphosphate + ATP. It functions in the pathway amino-acid biosynthesis; L-histidine biosynthesis; L-histidine from 5-phospho-alpha-D-ribose 1-diphosphate: step 1/9. Feedback inhibited by histidine. In terms of biological role, catalyzes the condensation of ATP and 5-phosphoribose 1-diphosphate to form N'-(5'-phosphoribosyl)-ATP (PR-ATP). Has a crucial role in the pathway because the rate of histidine biosynthesis seems to be controlled primarily by regulation of HisG enzymatic activity. The sequence is that of ATP phosphoribosyltransferase from Pyrobaculum neutrophilum (strain DSM 2338 / JCM 9278 / NBRC 100436 / V24Sta) (Thermoproteus neutrophilus).